A 245-amino-acid polypeptide reads, in one-letter code: uncharacterized protein (245 aa).

This is an uncharacterized protein from Dictyostelium discoideum (Social amoeba).